We begin with the raw amino-acid sequence, 805 residues long: Arginine/serine-rich protein PNISR (805 aa).

Over residues 75 to 88 the composition is skewed to polar residues; the sequence is NNHGNFQGDSNFNR. Disordered stretches follow at residues 75-331 and 382-805; these read NNHG…EEKE and LTGL…SRSR. Composition is skewed to pro residues over residues 100–115 and 183–194; these read PPHP…PAPG and YWQPGPPGPPAP. Residues 197-210 are compositionally biased toward basic and acidic residues; sequence NRRERPPSFRDRQR. Residues S204 and S211 each carry the phosphoserine modification. K218 participates in a covalent cross-link: Glycyl lysine isopeptide (Lys-Gly) (interchain with G-Cter in SUMO2). Positions 237–276 form a coiled coil; sequence REGLEKMEREKQKKLEKERMEQQRSQLSKKEKKATEDAEG. The span at 238–258 shows a compositional bias: basic and acidic residues; sequence EGLEKMEREKQKKLEKERMEQ. Phosphoserine occurs at positions 290, 304, 313, and 321. A compositionally biased stretch (acidic residues) spans 290 to 299; it reads SDEEDEDAEN. Residues 384–393 show a composition bias toward gly residues; it reads GLGGLGGYGS. The span at 421–463 shows a compositional bias: basic and acidic residues; sequence QKQEAFWRKEKEQQLLQDKQIEEEKQQTERVTKEMNEFIHREQ. Residues 427 to 461 adopt a coiled-coil conformation; sequence WRKEKEQQLLQDKQIEEEKQQTERVTKEMNEFIHR. Residues S465 and S467 each carry the phosphoserine modification. 2 stretches are compositionally biased toward basic and acidic residues: residues 473-486 and 494-508; these read EADR…KRTP and EPKR…ERGS. Residue T485 is modified to Phosphothreonine. K496 is covalently cross-linked (Glycyl lysine isopeptide (Lys-Gly) (interchain with G-Cter in SUMO2)). Low complexity predominate over residues 509–550; sequence RSGSSSSGSSSSGSRTSSSSSSVSSSSYSSSSGSSCTSSRSS. 4 stretches are compositionally biased toward basic residues: residues 551–560, 567–579, 587–598, and 607–639; these read SPKRRKRPSR, KARR…YSRR, TRGKLRDRRRSN, and RRNR…SRDR. Residues 659–721 are compositionally biased toward basic and acidic residues; sequence EAKEQDRKKE…KRKRESERTF (63 aa). A Glycyl lysine isopeptide (Lys-Gly) (interchain with G-Cter in SUMO2) cross-link involves residue K703. S726 bears the Phosphoserine mark. The segment covering 732 to 753 has biased composition (basic and acidic residues); the sequence is IRHDSRQDSKKNATKDSKRHSG. Over residues 754–767 the composition is skewed to low complexity; that stretch reads SDSSGRSSSESPGS. Basic residues-rich tracts occupy residues 771–781 and 789–805; these read KKAKKPKHSRS and RSGK…SRSR.

Belongs to the splicing factor SR family. In terms of assembly, interacts with PNN.

It localises to the nucleus speckle. The polypeptide is Arginine/serine-rich protein PNISR (Pnisr) (Mus musculus (Mouse)).